We begin with the raw amino-acid sequence, 281 residues long: N-acetyltransferase ECO1 (281 aa).

The CCHH-type zinc-finger motif lies at 33 to 57; it reads VKCDKCEMSYSSTSIEDRAIHEKYH. Positions 86–105 are disordered; it reads LSRSTGTITPLNSSPLKKSS. Over residues 95-105 the composition is skewed to low complexity; the sequence is PLNSSPLKKSS. Lys-223 carries the post-translational modification N6-acetyllysine; by autocatalysis.

It belongs to the acetyltransferase family. ECO subfamily. In terms of assembly, binds specifically to CHL12, RFC1, RFC2, RFC3, RFC4, RFC5 and RAD24 when members of an RFC complex. Interacts with CHL1 and MPS3. Autoacetylates in vitro.

It localises to the nucleus. Required for establishment of sister chromatid cohesion during S phase but not for its further maintenance during G2 or M phases or for loading the cohesin complex onto DNA. Interacts with the three known alternate replication factor C (RFC) complexes, suggesting that these complexes have essential but redundant activity in cohesion establishment. Acts by acetylating the cohesin complex component SMC3. In vitro, possesses acetyltransferase activity where it can acetylate itself and components of the cohesin complex (MCD1, IRR1 and PDS5), but is unable to acetylate histones. The sequence is that of N-acetyltransferase ECO1 (ECO1) from Saccharomyces cerevisiae (strain ATCC 204508 / S288c) (Baker's yeast).